The chain runs to 197 residues: MEGNPYLDRLYEMKVFGKWDPTEVEVRDPGLKDYICLKPMYLPHTGGRHAKKRFAKAEVPIVERLINRVMRTEKNTGKKHLAYNIVKRAFDIIHERTGENPIQVLVQALENAAPREETTTIIYGGISYHEAVDSSPQRRLDIALRLITEGAQQRAFRNPKPIEECLAEEIIAAARYDTECHSIRRKEEIERIAEAAR.

This sequence belongs to the universal ribosomal protein uS7 family. In terms of assembly, part of the 30S ribosomal subunit.

Functionally, one of the primary rRNA binding proteins, it binds directly to 16S rRNA where it nucleates assembly of the head domain of the 30S subunit. Is located at the subunit interface close to the decoding center. This Methanopyrus kandleri (strain AV19 / DSM 6324 / JCM 9639 / NBRC 100938) protein is Small ribosomal subunit protein uS7.